The chain runs to 610 residues: Elongation factor 4 (610 aa).

The region spanning 11–193 is the tr-type G domain; it reads EKIRNFSIIA…QIVEKVPAPT (183 aa). GTP is bound by residues 23–28 and 140–143; these read DHGKST and NKID.

Belongs to the TRAFAC class translation factor GTPase superfamily. Classic translation factor GTPase family. LepA subfamily.

It is found in the cell membrane. It catalyses the reaction GTP + H2O = GDP + phosphate + H(+). In terms of biological role, required for accurate and efficient protein synthesis under certain stress conditions. May act as a fidelity factor of the translation reaction, by catalyzing a one-codon backward translocation of tRNAs on improperly translocated ribosomes. Back-translocation proceeds from a post-translocation (POST) complex to a pre-translocation (PRE) complex, thus giving elongation factor G a second chance to translocate the tRNAs correctly. Binds to ribosomes in a GTP-dependent manner. This Streptococcus suis (strain 98HAH33) protein is Elongation factor 4.